Here is a 516-residue protein sequence, read N- to C-terminus: MSITSPPIEVSVLTDSIKNLLEKNFLRVVVKGELSNVSLQTSGHLYFAIKDSKAVLNGAFFHFRSKYFDRKPKDGDYVILHGKLTVYAPRGQYQIVAYALTFSGEGNLLQQFEERKQRLAAEGYFDPKRKKPLPSGARVIGVITSPTGAVIQDILRVLSRRCHQFQVILYPVTVQGATAAQEISQAIQFFNQNSMGVHALIIARGGGSIEDLWAFNEEELVKSIVASSIPIISAVGHETDFTLCDFASDVRAPTPSAAAEIVCKSSDQYRQELQNLRRYVSSHARQFIAAKKNLLTHWQRHLASVDFYHTAQQTLDYTRAALERGIETKLEYYKQRFAQYRRWLKSDVLIRIEKHLADLNQSLMLSIKNKIYTKKTSLNQLYTSCLKNELLNLQHRTQHSRNILSQLSRRLHIAIASSQQTHQECLVRLQNELSFTIQHLLTKAKERCQAIQEQASSLNPKNVLKRGFAQLFDFNKHFVIISAESLKQSDLVRVCLQDGEAVVSVKEVWLNNDKKG.

Belongs to the XseA family. Heterooligomer composed of large and small subunits.

The protein resides in the cytoplasm. It carries out the reaction Exonucleolytic cleavage in either 5'- to 3'- or 3'- to 5'-direction to yield nucleoside 5'-phosphates.. Bidirectionally degrades single-stranded DNA into large acid-insoluble oligonucleotides, which are then degraded further into small acid-soluble oligonucleotides. The protein is Exodeoxyribonuclease 7 large subunit of Chlamydia trachomatis serovar A (strain ATCC VR-571B / DSM 19440 / HAR-13).